A 166-amino-acid chain; its full sequence is Peptidyl-prolyl cis-trans isomerase-like 1 (166 aa).

A PPIase cyclophilin-type domain is found at Gln-10–Pro-164. Residues His-54–Gly-65, Thr-70–Gly-71, Ala-99–Gly-104, Gly-109–Phe-113, Thr-119, and Lys-125 contribute to the cyclosporin A site. Ser-149 is modified (phosphoserine).

Belongs to the cyclophilin-type PPIase family. PPIL1 subfamily. Identified in the spliceosome C complex. Interacts with SNW1/SKIP. Interacts with CDC40/PRP17; this interaction leads to CDC40 isomerization. Interacts with RBM22.

Its subcellular location is the nucleus. It catalyses the reaction [protein]-peptidylproline (omega=180) = [protein]-peptidylproline (omega=0). Inhibited by Cyclosporin A. Functionally, involved in pre-mRNA splicing as component of the spliceosome. PPIases accelerate the folding of proteins. It catalyzes the cis-trans isomerization of proline imidic peptide bonds in oligopeptides. Catalyzes prolyl peptide bond isomerization in CDC40/PRP17. Plays an important role in embryonic brain development; this function is independent of its isomerase activity. In Bos taurus (Bovine), this protein is Peptidyl-prolyl cis-trans isomerase-like 1 (PPIL1).